The sequence spans 201 residues: UPF0301 protein RER_60040 (201 aa).

It belongs to the UPF0301 (AlgH) family.

The sequence is that of UPF0301 protein RER_60040 from Rhodococcus erythropolis (strain PR4 / NBRC 100887).